The sequence spans 193 residues: Peptidyl-tRNA hydrolase (193 aa).

Position 16 (Tyr-16) interacts with tRNA. His-21 (proton acceptor) is an active-site residue. Residues Phe-66, Asn-68, and Asn-114 each coordinate tRNA.

This sequence belongs to the PTH family. As to quaternary structure, monomer.

It is found in the cytoplasm. It catalyses the reaction an N-acyl-L-alpha-aminoacyl-tRNA + H2O = an N-acyl-L-amino acid + a tRNA + H(+). Hydrolyzes ribosome-free peptidyl-tRNAs (with 1 or more amino acids incorporated), which drop off the ribosome during protein synthesis, or as a result of ribosome stalling. Its function is as follows. Catalyzes the release of premature peptidyl moieties from peptidyl-tRNA molecules trapped in stalled 50S ribosomal subunits, and thus maintains levels of free tRNAs and 50S ribosomes. The protein is Peptidyl-tRNA hydrolase of Trichlorobacter lovleyi (strain ATCC BAA-1151 / DSM 17278 / SZ) (Geobacter lovleyi).